The primary structure comprises 113 residues: uncharacterized protein (113 aa).

It to H.influenzae HI_1053 and P.denitrificans COX locus Uncharacterized protein 4.

This is an uncharacterized protein from Cupriavidus necator (strain ATCC 17699 / DSM 428 / KCTC 22496 / NCIMB 10442 / H16 / Stanier 337) (Ralstonia eutropha).